The following is a 285-amino-acid chain: BAG family molecular chaperone regulator 2 (285 aa).

Residues 37–113 (RGIRVRVKYG…LILIEDPISQ (77 aa)) form the Ubiquitin-like domain. Residues 132 to 210 (AISDISFQVE…KYVEALDLLK (79 aa)) enclose the BAG domain. Position 244 is a phosphoserine (Ser244).

Binds to the ATPase domain of HSP70/HSC70 chaperones.

Co-chaperone that regulates diverse cellular pathways, such as programmed cell death and stress responses. This Arabidopsis thaliana (Mouse-ear cress) protein is BAG family molecular chaperone regulator 2 (BAG2).